A 465-amino-acid chain; its full sequence is Putative adhesin P1-like protein MPN_286 (465 aa).

Disordered stretches follow at residues 9–48 (GNGH…STFS), 59–78 (QGTL…PKWP), and 93–167 (WRND…LPPN). A compositionally biased stretch (low complexity) spans 21–37 (SNSSTSGVTTQGQQSQN). The segment covering 38 to 48 (ASGTEPASTFS) has biased composition (polar residues). Positions 111–131 (TSATGSGQQGSSSGTTNSAGN) are enriched in low complexity. The span at 135 to 144 (LKQDKVDKSG) shows a compositional bias: basic and acidic residues. Polar residues predominate over residues 145–156 (DSVTVAETTSGD). Residues 157–167 (NLTNYTNLPPN) show a composition bias toward low complexity.

It belongs to the adhesin P1 family.

The polypeptide is Putative adhesin P1-like protein MPN_286 (Mycoplasma pneumoniae (strain ATCC 29342 / M129 / Subtype 1) (Mycoplasmoides pneumoniae)).